The chain runs to 652 residues: MATDAHKETLEFQAEVQQLLHLMIHSLYSNKDIFLRELISNASDAIDKLRFQSLQDESLLEGEGDLRIRVSVDKDARTITVADNGIGMTRDEVAENLGTIARSGTKAFLDQLTGDQQKDAKLIGQFGVGFYSAFVVAEHVTVHTRKAGLGAEHGVRWSSDGKGAYTLENEEVAERGTRVVLTLPESQSEYLDDWRLKGIIRRYSDHIDVPIQMPAQAEDKDEPEDEAEKAEAAETWETVNNTNALWMRPKSEISDDDYKAFYKHVAHDFDDPMVWLHNHVEGRQSYTSLLYIPKNPPFDLYEREPAHGIKLYVRRVFIMEDTEKLMPRYLRFVRGLVDSDDLPLNVSRELLQHNPLLDKIRSASVKRILDRLEKMAKNEPEQYAEFYGNFGKVLKEGVAEDFANRERIAKLLRFSTTQDENETPDVSLDDYIARMKEGQEAIYYVTAESFNAARNSPHLEVFRKKGVEVLLLPDPVDEWVITHLNEYDGKPLKSVAKGGLDLGELEDQAEKKAAEEATESHKDLLEKLKGALEDKVSEVRVSTRLTDSPACLVVGEYDFGMGMQRLLKAAGHAMPQGKPALEINIDHPIVQRMDTGLDDARFSDWAAVLYDQALLTEGGQLEDPAAFVKRVNALLTEQARAGEAKSNAARGD.

Positions 1–348 (MATDAHKETL…SDDLPLNVSR (348 aa)) are a; substrate-binding. The interval 349–565 (ELLQHNPLLD…EYDFGMGMQR (217 aa)) is b. The tract at residues 566–652 (LLKAAGHAMP…EAKSNAARGD (87 aa)) is c.

Belongs to the heat shock protein 90 family. As to quaternary structure, homodimer.

It is found in the cytoplasm. In terms of biological role, molecular chaperone. Has ATPase activity. This Alkalilimnicola ehrlichii (strain ATCC BAA-1101 / DSM 17681 / MLHE-1) protein is Chaperone protein HtpG.